The chain runs to 299 residues: MRAERRKQLFRLLGDLPDRRPISVETLRIEEREENIVETLLLDLNGHEKAPAYFVKPKKTEGPCPAVLFQHSHGGQYDRGKSELIEGADYLKTPSFSDELTSLGYGVLAIDHWGFGDRRGKAESEIFKEMLLTGKVMWGMMIYDSLSALDYMQSRSDVQPDRIGTIGMSMGGLMAWWTAALDDRIKVCVDLCSQVDHHVLIKTQNLDRHGFYYYVPSLAKHFSASEIQSLIAPRPHLSLVGVHDRLTPAEGVDKIEKELTAVYAGQGAADCYRVVRSASGHFETAVIRHEAVRFLQKWL.

This sequence belongs to the dienelactone hydrolase family.

The sequence is that of Putative hydrolase YtaP (ytaP) from Bacillus subtilis (strain 168).